Consider the following 64-residue polypeptide: Purotoxin-2 (64 aa).

The tract at residues 1–44 (AKACTPLLHDCSHDRHSCCRGDMFKYVCDCFYPEGEDKTEVCSC) is knottin domain. 4 cysteine pairs are disulfide-bonded: Cys-4–Cys-19, Cys-11–Cys-28, Cys-18–Cys-44, and Cys-30–Cys-42. Residues 45-64 (QQPKSHKIAEKIIDKAKTTL) form a linear cationic cytotoxin domain region. The residue at position 64 (Leu-64) is a Leucine amide.

Belongs to the neurotoxin 19 (CSTX) family. 05 (U4-Lctx) subfamily. Post-translationally, amidation at Leu-64 is not mandatory for activity on P2RX3. As to expression, expressed by the venom gland.

It localises to the secreted. Functionally, enhances the high-affinity desensitization of human P2RX3 purinoceptors. At 50 nM, the toxin decreases the IC(50) for ambient ATP from 2.67 nM to 0.77 nM in human P2RX3. This Alopecosa marikovskyi (Wolf spider) protein is Purotoxin-2.